An 81-amino-acid chain; its full sequence is RNA-binding protein Hfq (81 aa).

Positions 9 to 68 constitute a Sm domain; that stretch reads DPFLNVLRRERVPVFIYLINGIKLQGEIESFDKFVILLRNTVNQMIYKHAISTIVPSRVV.

It belongs to the Hfq family. In terms of assembly, homohexamer.

Its function is as follows. RNA chaperone that binds small regulatory RNA (sRNAs) and mRNAs to facilitate mRNA translational regulation in response to envelope stress, environmental stress and changes in metabolite concentrations. Also binds with high specificity to tRNAs. This chain is RNA-binding protein Hfq, found in Blochmanniella pennsylvanica (strain BPEN).